We begin with the raw amino-acid sequence, 749 residues long: Polyribonucleotide nucleotidyltransferase (749 aa).

2 residues coordinate Mg(2+): Asp487 and Asp493. The region spanning 554-613 is the KH domain; it reads PSTTTIKIDKDKIRDIIGPGGKIIKEICETSGAKIDISDDGTVSVYASDRDKLKVALDKI. The S1 motif domain maps to 623 to 691; sequence GEIFNGTVVK…NKGKAKLTIK (69 aa). A disordered region spans residues 691 to 749; the sequence is KNADKDKSSNNTKPKTNVNNTNKDNSEPEQRRDSSKKRAWNEDNNAETAEVITERKYFN. A compositionally biased stretch (low complexity) spans 699–713; sequence SNNTKPKTNVNNTNK. A compositionally biased stretch (basic and acidic residues) spans 714–723; that stretch reads DNSEPEQRRD.

The protein belongs to the polyribonucleotide nucleotidyltransferase family. Mg(2+) is required as a cofactor.

It localises to the cytoplasm. The enzyme catalyses RNA(n+1) + phosphate = RNA(n) + a ribonucleoside 5'-diphosphate. In terms of biological role, involved in mRNA degradation. Catalyzes the phosphorolysis of single-stranded polyribonucleotides processively in the 3'- to 5'-direction. This Rickettsia conorii (strain ATCC VR-613 / Malish 7) protein is Polyribonucleotide nucleotidyltransferase.